The chain runs to 927 residues: DNA mismatch repair protein MutS (927 aa).

The disordered stretch occupies residues 44–80; that stretch reads DESLKRPRNRHKPTSVPSIPLDSESQEQLETADNDND. Positions 67–79 are enriched in acidic residues; it reads ESQEQLETADNDN. Residue 725 to 732 participates in ATP binding; the sequence is GPNASGKS.

It belongs to the DNA mismatch repair MutS family.

This protein is involved in the repair of mismatches in DNA. It is possible that it carries out the mismatch recognition step. This protein has a weak ATPase activity. In Prochlorococcus marinus (strain MIT 9303), this protein is DNA mismatch repair protein MutS.